Reading from the N-terminus, the 129-residue chain is Follitropin subunit beta (129 aa).

The first 20 residues, 1-20 (MKSVQFCFLFCCWRAICCRS), serve as a signal peptide directing secretion. 6 disulfides stabilise this stretch: C21/C69, C35/C84, C38/C122, C46/C100, C50/C102, and C105/C112. N-linked (GlcNAc...) asparagine glycosylation is found at N25 and N42.

It belongs to the glycoprotein hormones subunit beta family. In terms of assembly, heterodimer. The active follitropin is a heterodimer composed of an alpha chain/CGA shared with other hormones and a unique beta chain/FSHB shown here.

The protein resides in the secreted. Its function is as follows. Together with the alpha chain CGA constitutes follitropin, the follicle-stimulating hormone, and provides its biological specificity to the hormone heterodimer. Binds FSHR, a G protein-coupled receptor, on target cells to activate downstream signaling pathways. Follitropin is involved in follicle development and spermatogenesis in reproductive organs. This chain is Follitropin subunit beta (FSHB), found in Bos taurus (Bovine).